A 215-amino-acid polypeptide reads, in one-letter code: Probable transaldolase 1 (215 aa).

The Schiff-base intermediate with substrate role is filled by lysine 83.

Belongs to the transaldolase family. Type 3B subfamily.

It is found in the cytoplasm. The enzyme catalyses D-sedoheptulose 7-phosphate + D-glyceraldehyde 3-phosphate = D-erythrose 4-phosphate + beta-D-fructose 6-phosphate. The protein operates within carbohydrate degradation; pentose phosphate pathway; D-glyceraldehyde 3-phosphate and beta-D-fructose 6-phosphate from D-ribose 5-phosphate and D-xylulose 5-phosphate (non-oxidative stage): step 2/3. Its function is as follows. Transaldolase is important for the balance of metabolites in the pentose-phosphate pathway. This Bacillus anthracis protein is Probable transaldolase 1.